The primary structure comprises 56 residues: Large ribosomal subunit protein bL33 (56 aa).

It belongs to the bacterial ribosomal protein bL33 family.

This Actinobacillus pleuropneumoniae serotype 5b (strain L20) protein is Large ribosomal subunit protein bL33.